Consider the following 294-residue polypeptide: Cytidine deaminase (294 aa).

2 consecutive CMP/dCMP-type deaminase domains span residues 48-168 (DDNT…FGPN) and 187-294 (ETTD…YYTF). 89-91 (NME) contributes to the substrate binding site. Residue H102 participates in Zn(2+) binding. Residue E104 is the Proton donor of the active site. Zn(2+)-binding residues include C129 and C132.

The protein belongs to the cytidine and deoxycytidylate deaminase family. As to quaternary structure, homodimer. The cofactor is Zn(2+).

The catalysed reaction is cytidine + H2O + H(+) = uridine + NH4(+). It catalyses the reaction 2'-deoxycytidine + H2O + H(+) = 2'-deoxyuridine + NH4(+). In terms of biological role, this enzyme scavenges exogenous and endogenous cytidine and 2'-deoxycytidine for UMP synthesis. The protein is Cytidine deaminase of Photorhabdus laumondii subsp. laumondii (strain DSM 15139 / CIP 105565 / TT01) (Photorhabdus luminescens subsp. laumondii).